Here is a 319-residue protein sequence, read N- to C-terminus: Acetyl-coenzyme A carboxylase carboxyl transferase subunit alpha (319 aa).

In terms of domain architecture, CoA carboxyltransferase C-terminal spans aspartate 35–aspartate 296.

It belongs to the AccA family. As to quaternary structure, acetyl-CoA carboxylase is a heterohexamer composed of biotin carboxyl carrier protein (AccB), biotin carboxylase (AccC) and two subunits each of ACCase subunit alpha (AccA) and ACCase subunit beta (AccD).

It is found in the cytoplasm. It catalyses the reaction N(6)-carboxybiotinyl-L-lysyl-[protein] + acetyl-CoA = N(6)-biotinyl-L-lysyl-[protein] + malonyl-CoA. Its pathway is lipid metabolism; malonyl-CoA biosynthesis; malonyl-CoA from acetyl-CoA: step 1/1. Functionally, component of the acetyl coenzyme A carboxylase (ACC) complex. First, biotin carboxylase catalyzes the carboxylation of biotin on its carrier protein (BCCP) and then the CO(2) group is transferred by the carboxyltransferase to acetyl-CoA to form malonyl-CoA. This chain is Acetyl-coenzyme A carboxylase carboxyl transferase subunit alpha, found in Vibrio parahaemolyticus serotype O3:K6 (strain RIMD 2210633).